Reading from the N-terminus, the 28-residue chain is M-poneritoxin-Da4b (28 aa).

An Alanine amide modification is found at A28.

As to expression, expressed by the venom gland.

It localises to the secreted. The synthetic peptide has antimicrobial activity against the Gram-positive bacteria B.amyloliquefacies S499 (MIC=0.05 mM), L.monocytogenes 2231 and S.aureus ATCC 29213, against the Gram-negative bacteria P.putida BTP1, P.aeruginosa PaO1 and E.coli ATCC 10536, and against the fungi S.cerevisiae, R.mucilaginosa and C.cucumerinum. It is not active against the fungi F.oxysporum and B.cinerea. This Dinoponera australis (Giant neotropical hunting ant) protein is M-poneritoxin-Da4b.